A 96-amino-acid chain; its full sequence is Toxin ParE1 (96 aa).

It belongs to the RelE toxin family. As to quaternary structure, forms a ParD1(2)-ParE1(2) heterotetramer.

Functionally, toxic component of a type II toxin-antitoxin (TA) system. Its toxic effect is neutralized by coexpression with cognate antitoxin ParD1 but no other ParD or RelB antitoxin. Low levels of wild-type toxin in the absence of antitoxin decreases the rate of cell growth, and results in death or loss of colony formation abilities and greatly elongated cells. Low levels of a mutant missing the last 4 residues leads to loss of cell division while cell elongation continues. This Caulobacter vibrioides (strain ATCC 19089 / CIP 103742 / CB 15) (Caulobacter crescentus) protein is Toxin ParE1 (parE1).